Here is a 259-residue protein sequence, read N- to C-terminus: MNTQTAPSPQFYLTAPAACPYLPNQMERKVFTHMVGERAPELNDLLTQGGFRRSQNIAYRPACETCRACISVRILTNEFAPTRSMRRVLAANGEIVSAEYPAEPSSEQYNLFRRYLDCRHQKGGMSDMSVLDYAMMVEDTHVHTKIIEYRLRVEGDGINDKARGPLIATALTDRMSDGLSMVYSFFDPALSERSLGTYMILDHIRRAKERGLPHVYLGYWVKGSRKMGYKTKFLPQEHLMARGWERYSGEHDSTKPATD.

The protein belongs to the R-transferase family. Bpt subfamily.

The protein resides in the cytoplasm. The enzyme catalyses N-terminal L-glutamyl-[protein] + L-leucyl-tRNA(Leu) = N-terminal L-leucyl-L-glutamyl-[protein] + tRNA(Leu) + H(+). It catalyses the reaction N-terminal L-aspartyl-[protein] + L-leucyl-tRNA(Leu) = N-terminal L-leucyl-L-aspartyl-[protein] + tRNA(Leu) + H(+). Functions in the N-end rule pathway of protein degradation where it conjugates Leu from its aminoacyl-tRNA to the N-termini of proteins containing an N-terminal aspartate or glutamate. This Rhizobium meliloti (strain 1021) (Ensifer meliloti) protein is Aspartate/glutamate leucyltransferase.